Here is a 71-residue protein sequence, read N- to C-terminus: Conotoxin Pl071 (71 aa).

Positions 1-20 (MSRLFMILLVICVITLGTDA) are cleaved as a signal peptide. Residues 21–31 (SQAEDSGTEKR) constitute a propeptide that is removed on maturation. Y69 is modified (tyrosine amide).

It belongs to the conotoxin NSf-1 superfamily. In terms of tissue distribution, expressed by the venom duct.

Its subcellular location is the secreted. In terms of biological role, probable neurotoxin with unknown target. Possibly targets ion channels. In Conus planorbis (Planorbis cone), this protein is Conotoxin Pl071.